A 451-amino-acid chain; its full sequence is MKWLKKQAELYPQKQFLNDSTFAQINQEVNKMAEHLAPLIDNQSRVALLSENSVEMAVVLFALLGLSKEVLLLNRHLTEYELADQIKELKIDKVFTSDLLTEKVTDSISFSEIWTSNPCPVSLSADFPDEKIAVIMNTSATTGKFKSVPITWGMISNHVKASKETLGAYDNDNWLVILPMFHVSGLSIIMRTLYNATSATVVDKFDENQLLEMINSGKINMVSLVPTLLTRIADKLHSNNLRLILLGGEFIPQPLIKKCQELGLPIYKTYGMTESFSQSVTFNILDFPDKTSSVGRPLPGVEIEIRQADLAGVGEIWLKSPMLMKAYLGQKPYGTAFETGDIGYLDTDGFLYLLNRRKDIIISGGENIYPKEIEDLVYSLPEIKECALVAKPDAKWGQVPILFVSGNISQEKLENFLTEKLAKYKRPQSITFMDELPKNASGKILRKELKG.

This sequence belongs to the ATP-dependent AMP-binding enzyme family. MenE subfamily.

The catalysed reaction is 2-succinylbenzoate + ATP + CoA = 2-succinylbenzoyl-CoA + AMP + diphosphate. The protein operates within quinol/quinone metabolism; 1,4-dihydroxy-2-naphthoate biosynthesis; 1,4-dihydroxy-2-naphthoate from chorismate: step 5/7. Its pathway is quinol/quinone metabolism; menaquinone biosynthesis. In terms of biological role, converts 2-succinylbenzoate (OSB) to 2-succinylbenzoyl-CoA (OSB-CoA). The sequence is that of 2-succinylbenzoate--CoA ligase from Lactococcus lactis subsp. lactis (strain IL1403) (Streptococcus lactis).